The following is a 679-amino-acid chain: UvrABC system protein C (679 aa).

The GIY-YIG domain occupies 65–143 (NSPGVYRMLN…IKRLRPRFNV (79 aa)). Residues 253–288 (QKVKSHMAEAMNQAAEDLDFERAAIYRDRLAALSHV) enclose the UVR domain.

It belongs to the UvrC family. Interacts with UvrB in an incision complex.

Its subcellular location is the cytoplasm. In terms of biological role, the UvrABC repair system catalyzes the recognition and processing of DNA lesions. UvrC both incises the 5' and 3' sides of the lesion. The N-terminal half is responsible for the 3' incision and the C-terminal half is responsible for the 5' incision. The sequence is that of UvrABC system protein C from Rhizobium etli (strain ATCC 51251 / DSM 11541 / JCM 21823 / NBRC 15573 / CFN 42).